Here is a 280-residue protein sequence, read N- to C-terminus: Urease accessory protein UreD 1 (280 aa).

The protein belongs to the UreD family. In terms of assembly, ureD, UreF and UreG form a complex that acts as a GTP-hydrolysis-dependent molecular chaperone, activating the urease apoprotein by helping to assemble the nickel containing metallocenter of UreC. The UreE protein probably delivers the nickel.

Its subcellular location is the cytoplasm. In terms of biological role, required for maturation of urease via the functional incorporation of the urease nickel metallocenter. This is Urease accessory protein UreD 1 from Brucella canis (strain ATCC 23365 / NCTC 10854 / RM-666).